The primary structure comprises 178 residues: Female-specific protein transformer (178 aa).

Composition is skewed to basic and acidic residues over residues 1 to 18 (MKMD…DSHG) and 25 to 40 (RERE…DSKK). A disordered region spans residues 1 to 117 (MKMDADSSCG…RRYNPPPKII (117 aa)). 2 stretches are compositionally biased toward basic residues: residues 59 to 73 (RRLR…RRSA) and 81 to 108 (RRHR…RSPR).

It localises to the nucleus speckle. Its function is as follows. Member of the regulatory pathway controlling female somatic sexual differentiation, regulated by Sxl. Activates dsx female-specific splicing by promoting the formation of a splicing enhancer complex which consists of tra, tra2 and sr proteins. This Drosophila erecta (Fruit fly) protein is Female-specific protein transformer (tra).